The chain runs to 419 residues: 20-hydroxy-prefusarin hydrolase FUS2 (419 aa).

Ser-238 is an active-site residue.

Belongs to the AB hydrolase superfamily. FUS2 hydrolase family.

It functions in the pathway mycotoxin biosynthesis. Functionally, 20-hydroxy-prefusarin hydrolase; part of the gene cluster that mediates the biosynthesis of the mycotoxin fusarin C. Within the cluster, FUS1, FUS2, FUS8 and FUS9 are sufficient for fusarin production. The roles of the other FUS members are yet undetermined. The fusarin C synthetase FUS1 is responsible for the condensation of one acetyl-coenzyme A (CoA) unit with six malonyl-CoA units and the amide linkage of the arising heptaketide and homoserine, subsequently releasing the first intermediate, prefusarin, as an alcohol with an open ring structure. The cytochrome P450 monooxygenase FUS8 participates in multiple oxidation processes at carbon C-20 and is able to use the FUS1 product as substrate, resulting in formation of 20-hydroxy-prefusarin. This reaction seems to be essential before the 2-pyrrolidone ring closure can be catalyzed by FUS2, generating 20-hydroxy-fusarin. FUS8 is able to further oxidizes carbon C-20 after ring closure, resulting in the formation of carboxy-fusarin C. As the last step, FUS9 methylates the hydroxyl group at C-21 to generate fusarin C. Fusarin C can then rearrange to epi-fusarin C, the (z)-isomers, and fusarin A and fusarin D. In Gibberella moniliformis (strain M3125 / FGSC 7600) (Maize ear and stalk rot fungus), this protein is 20-hydroxy-prefusarin hydrolase FUS2.